The primary structure comprises 210 residues: Putative 3-methyladenine DNA glycosylase (210 aa).

The interval Ser180 to Pro210 is disordered. The span at Ala186–Ala196 shows a compositional bias: low complexity. Over residues Arg201 to Pro210 the composition is skewed to basic residues.

The protein belongs to the DNA glycosylase MPG family.

The sequence is that of Putative 3-methyladenine DNA glycosylase from Anaeromyxobacter dehalogenans (strain 2CP-1 / ATCC BAA-258).